The following is a 63-amino-acid chain: Large ribosomal subunit protein bL32 (63 aa).

Residues methionine 1–serine 18 are compositionally biased toward basic residues. The segment at methionine 1–asparagine 26 is disordered.

It belongs to the bacterial ribosomal protein bL32 family.

This chain is Large ribosomal subunit protein bL32, found in Neorickettsia sennetsu (strain ATCC VR-367 / Miyayama) (Ehrlichia sennetsu).